The sequence spans 235 residues: Urease accessory protein UreF (235 aa).

Belongs to the UreF family. UreD, UreF and UreG form a complex that acts as a GTP-hydrolysis-dependent molecular chaperone, activating the urease apoprotein by helping to assemble the nickel containing metallocenter of UreC. The UreE protein probably delivers the nickel.

The protein resides in the cytoplasm. Its function is as follows. Required for maturation of urease via the functional incorporation of the urease nickel metallocenter. In Pseudoalteromonas translucida (strain TAC 125), this protein is Urease accessory protein UreF.